The chain runs to 113 residues: Putative membrane protein insertion efficiency factor (113 aa).

This sequence belongs to the UPF0161 family.

It localises to the cell inner membrane. Its function is as follows. Could be involved in insertion of integral membrane proteins into the membrane. The chain is Putative membrane protein insertion efficiency factor from Campylobacter jejuni subsp. jejuni serotype O:2 (strain ATCC 700819 / NCTC 11168).